Reading from the N-terminus, the 348-residue chain is Short-wave-sensitive opsin 1 (348 aa).

Residues 1–33 (MRKMSEEEFYLFKNISSVGPWDGPQYHIAPVWA) lie on the Extracellular side of the membrane. N-linked (GlcNAc...) asparagine glycosylation is present at Asn-14. A helical transmembrane segment spans residues 34-58 (FYLQAAFMGTVFLIGFPLNAMVLVA). The Cytoplasmic segment spans residues 59–70 (TLRYKKLRQPLN). The helical transmembrane segment at 71-96 (YILVNVSFGGFLLCIFSVFPVFVASC) threads the bilayer. Topologically, residues 97–110 (NGYFVFGRHVCALE) are extracellular. A disulfide bridge links Cys-107 with Cys-184. A helical membrane pass occupies residues 111–130 (GFLGTVAGLVTGWSLAFLAF). Topologically, residues 131-149 (ERYIVICKPFGNFRFSSKH) are cytoplasmic. Residues 150–173 (ALTVVLATWTIGIGVSIPPFFGWS) form a helical membrane-spanning segment. Over 174-199 (RFIPEGLQCSCGPDWYTVGTKYRSES) the chain is Extracellular. Residues 200-227 (YTWFLFIFCFIVPLSLICFSYTQLLRAL) traverse the membrane as a helical segment. The Cytoplasmic portion of the chain corresponds to 228 to 249 (KAVAAQQQESATTQKAEREVSR). Residues 250–273 (MVVVMVGSFCVCYVPYAAFAMYMV) form a helical membrane-spanning segment. The Extracellular segment spans residues 274–281 (NNRNHGLD). Residues 282-306 (LRLVTIPSFFSKSACIYNPIIYCFM) form a helical membrane-spanning segment. Lys-293 is subject to N6-(retinylidene)lysine. Residues 307–348 (NKQFQACIMKMVCGKAMTDESDTCSSQKTEVSTVSSTQVGPN) are Cytoplasmic-facing.

The protein belongs to the G-protein coupled receptor 1 family. Opsin subfamily. In terms of processing, phosphorylated on some or all of the serine and threonine residues present in the C-terminal region.

It localises to the cell membrane. The protein localises to the photoreceptor inner segment. It is found in the cell projection. The protein resides in the cilium. Its subcellular location is the photoreceptor outer segment. It localises to the cytoplasm. The protein localises to the perinuclear region. Its function is as follows. Visual pigments are the light-absorbing molecules that mediate vision. They consist of an apoprotein, opsin, covalently linked to cis-retinal. Required for the maintenance of cone outer segment organization in the ventral retina, but not essential for the maintenance of functioning cone photoreceptors. Involved in ensuring correct abundance and localization of retinal membrane proteins. May increase spectral sensitivity in dim light. The sequence is that of Short-wave-sensitive opsin 1 (OPN1SW) from Pan paniscus (Pygmy chimpanzee).